Reading from the N-terminus, the 196-residue chain is Probable calcium-binding protein CML32 (196 aa).

EF-hand domains follow at residues 30-65, 121-156, and 159-194; these read LNAV…LGLV, DEEE…LGLP, and GSLA…ITVW. 14 residues coordinate Ca(2+): Asp43, Asn45, Asp47, Glu49, Glu54, Asp134, Asp136, Asp138, Glu145, Asp172, Asn174, Asp176, Arg178, and Glu183.

In terms of biological role, potential calcium sensor. The protein is Probable calcium-binding protein CML32 (CML32) of Oryza sativa subsp. japonica (Rice).